A 268-amino-acid polypeptide reads, in one-letter code: Undecaprenyl-diphosphatase (268 aa).

A run of 8 helical transmembrane segments spans residues Val-8–Leu-28, Ala-41–Leu-61, Phe-83–Lys-103, Val-108–Trp-128, Phe-144–Val-164, Ala-184–Phe-204, Ile-218–Leu-238, and Phe-246–Leu-266.

This sequence belongs to the UppP family.

The protein resides in the cell inner membrane. It catalyses the reaction di-trans,octa-cis-undecaprenyl diphosphate + H2O = di-trans,octa-cis-undecaprenyl phosphate + phosphate + H(+). Functionally, catalyzes the dephosphorylation of undecaprenyl diphosphate (UPP). Confers resistance to bacitracin. The chain is Undecaprenyl-diphosphatase from Bradyrhizobium diazoefficiens (strain JCM 10833 / BCRC 13528 / IAM 13628 / NBRC 14792 / USDA 110).